The following is a 261-amino-acid chain: 5'-nucleotidase SurE (261 aa).

Residues aspartate 17, aspartate 18, serine 48, and asparagine 104 each contribute to the a divalent metal cation site.

Belongs to the SurE nucleotidase family. The cofactor is a divalent metal cation.

It is found in the cytoplasm. It catalyses the reaction a ribonucleoside 5'-phosphate + H2O = a ribonucleoside + phosphate. Its function is as follows. Nucleotidase that shows phosphatase activity on nucleoside 5'-monophosphates. This chain is 5'-nucleotidase SurE, found in Deinococcus geothermalis (strain DSM 11300 / CIP 105573 / AG-3a).